The primary structure comprises 168 residues: Photosystem I assembly protein Ycf3 (168 aa).

3 TPR repeats span residues 35–68, 72–105, and 120–153; these read AFTY…EIDP, SYIL…NPFL, and GEQA…TPGN.

Belongs to the Ycf3 family.

Its subcellular location is the plastid membrane. Essential for the assembly of the photosystem I (PSI) complex. May act as a chaperone-like factor to guide the assembly of the PSI subunits. This chain is Photosystem I assembly protein Ycf3, found in Cuscuta reflexa (Southern Asian dodder).